Consider the following 251-residue polypeptide: Probable caffeoyl-CoA O-methyltransferase 3 (251 aa).

S-adenosyl-L-methionine-binding positions include Thr-61, Asp-83, 85–86 (GV), Ser-91, Asp-109, and Ala-138. Asp-160 contributes to the a divalent metal cation binding site. Residue Asp-162 coordinates S-adenosyl-L-methionine. A divalent metal cation contacts are provided by Asp-186 and Asn-187.

It belongs to the class I-like SAM-binding methyltransferase superfamily. Cation-dependent O-methyltransferase family. CCoAMT subfamily.

The enzyme catalyses (E)-caffeoyl-CoA + S-adenosyl-L-methionine = (E)-feruloyl-CoA + S-adenosyl-L-homocysteine + H(+). The chain is Probable caffeoyl-CoA O-methyltransferase 3 (omt1) from Dictyostelium discoideum (Social amoeba).